The following is an 81-amino-acid chain: ATP synthase subunit c (81 aa).

The next 2 helical transmembrane spans lie at 5-25 and 57-77; these read VAAASVIAAALAVGLAAIGPG and LAFMESLTIYGLVIALVLLFA.

This sequence belongs to the ATPase C chain family. As to quaternary structure, F-type ATPases have 2 components, F(1) - the catalytic core - and F(0) - the membrane proton channel. F(1) has five subunits: alpha(3), beta(3), gamma(1), delta(1), epsilon(1). F(0) has four main subunits: a(1), b(1), b'(1) and c(10-14). The alpha and beta chains form an alternating ring which encloses part of the gamma chain. F(1) is attached to F(0) by a central stalk formed by the gamma and epsilon chains, while a peripheral stalk is formed by the delta, b and b' chains.

It localises to the cellular thylakoid membrane. Functionally, f(1)F(0) ATP synthase produces ATP from ADP in the presence of a proton or sodium gradient. F-type ATPases consist of two structural domains, F(1) containing the extramembraneous catalytic core and F(0) containing the membrane proton channel, linked together by a central stalk and a peripheral stalk. During catalysis, ATP synthesis in the catalytic domain of F(1) is coupled via a rotary mechanism of the central stalk subunits to proton translocation. Key component of the F(0) channel; it plays a direct role in translocation across the membrane. A homomeric c-ring of between 10-14 subunits forms the central stalk rotor element with the F(1) delta and epsilon subunits. The protein is ATP synthase subunit c of Microcystis aeruginosa (strain NIES-843 / IAM M-2473).